The sequence spans 28 residues: Small spore coat assembly protein A (28 aa).

Residues 8–28 (GFALLVVLFILLIIVGAAYIY) form a helical membrane-spanning segment.

Belongs to the SscA family.

The protein localises to the spore coat. It localises to the membrane. Functionally, spore protein involved in the assembly of several components of the spore coat, including CotB, CotG and CotH, and in spore germination. This Bacillus subtilis (strain 168) protein is Small spore coat assembly protein A.